A 319-amino-acid chain; its full sequence is Guanosine ABC transporter permease protein NupQ (319 aa).

9 helical membrane-spanning segments follow: residues 6 to 26, 39 to 59, 65 to 85, 99 to 119, 159 to 179, 204 to 224, 235 to 255, 257 to 277, and 282 to 302; these read ILSIIVPATLVYAAPLILTAL, IGLEGLMIIGAFTSVLFNLFF, AAAPWLSLLAAMAAGALFSLI, VSGVAINMLALGATLFIVKLI, ILAIALAFISWFILFKTPFGL, IGVMISGLFGGLGGGVYASTI, GQGFIALAALVFGKWHPIGAL, AALFFGFAQSLSIIGSLLPLF, and NVYMLMAPYILTILALTGFIG.

Belongs to the binding-protein-dependent transport system permease family. In terms of assembly, the complex is composed of two ATP-binding proteins (NupO), two transmembrane proteins (NupP and NupQ) and a solute-binding protein (NupN).

It localises to the cell membrane. Part of an ABC transporter complex involved in the uptake of guanosine. Responsible for the translocation of the substrate across the membrane. May be a nucleoside transporter of broad specificity but with various affinities for different substrates. The polypeptide is Guanosine ABC transporter permease protein NupQ (Bacillus subtilis (strain 168)).